We begin with the raw amino-acid sequence, 258 residues long: Mitochondrial distribution and morphology protein 12 (258 aa).

In terms of domain architecture, SMP-LTD spans M1–N233. Residues E238–N258 are disordered. Low complexity predominate over residues T246–N258.

Belongs to the MDM12 family. Component of the ER-mitochondria encounter structure (ERMES) or MDM complex, composed of MMM1, MDM10, MDM12 and MDM34. An MMM1 homodimer associates with one molecule of MDM12 on each side in a pairwise head-to-tail manner, and the SMP-LTD domains of MMM1 and MDM12 generate a continuous hydrophobic tunnel for phospholipid trafficking.

The protein localises to the mitochondrion outer membrane. It is found in the endoplasmic reticulum membrane. Functionally, component of the ERMES/MDM complex, which serves as a molecular tether to connect the endoplasmic reticulum (ER) and mitochondria. Components of this complex are involved in the control of mitochondrial shape and protein biogenesis, and function in nonvesicular lipid trafficking between the ER and mitochondria. MDM12 is required for the interaction of the ER-resident membrane protein MMM1 and the outer mitochondrial membrane-resident beta-barrel protein MDM10. The MDM12-MMM1 subcomplex functions in the major beta-barrel assembly pathway that is responsible for biogenesis of all mitochondrial outer membrane beta-barrel proteins, and acts in a late step after the SAM complex. The MDM10-MDM12-MMM1 subcomplex further acts in the TOM40-specific pathway after the action of the MDM12-MMM1 complex. Essential for establishing and maintaining the structure of mitochondria and maintenance of mtDNA nucleoids. This is Mitochondrial distribution and morphology protein 12 from Zygosaccharomyces rouxii (strain ATCC 2623 / CBS 732 / NBRC 1130 / NCYC 568 / NRRL Y-229).